The chain runs to 112 residues: UPF0102 protein Cla_1413 (112 aa).

It belongs to the UPF0102 family.

This chain is UPF0102 protein Cla_1413, found in Campylobacter lari (strain RM2100 / D67 / ATCC BAA-1060).